A 417-amino-acid polypeptide reads, in one-letter code: Dihydroorotase (417 aa).

Zn(2+) is bound by residues His60 and His62. Substrate-binding positions include 62–64 and Asn94; that span reads HLR. The Zn(2+) site is built by Lys138, His167, His207, and Asp275. Lys138 carries the post-translational modification N6-carboxylysine. Residue Asp275 is part of the active site. Residues His279 and 289 to 290 contribute to the substrate site; that span reads AG.

This sequence belongs to the metallo-dependent hydrolases superfamily. DHOase family. Class I DHOase subfamily. It depends on Zn(2+) as a cofactor.

It carries out the reaction (S)-dihydroorotate + H2O = N-carbamoyl-L-aspartate + H(+). Its pathway is pyrimidine metabolism; UMP biosynthesis via de novo pathway; (S)-dihydroorotate from bicarbonate: step 3/3. Its function is as follows. Catalyzes the reversible cyclization of carbamoyl aspartate to dihydroorotate. This chain is Dihydroorotase, found in Pyrococcus horikoshii (strain ATCC 700860 / DSM 12428 / JCM 9974 / NBRC 100139 / OT-3).